The primary structure comprises 358 residues: Cyclin-dependent kinase 10 (358 aa).

Positions 37-321 (FEKLNRIGEG…AGDCLESSYF (285 aa)) constitute a Protein kinase domain. ATP-binding positions include 43-51 (IGEGTYGIV) and lysine 66. Catalysis depends on aspartate 161, which acts as the Proton acceptor. Threonine 194 bears the Phosphothreonine mark. The tract at residues 332–358 (LMPTFPHHRNKRAAPAATEGQSKRCRP) is disordered.

The protein belongs to the protein kinase superfamily. CMGC Ser/Thr protein kinase family. CDC2/CDKX subfamily. Heterodimer with CCNQ, the interaction is required for kinase activity. Interacts with ETS2. Interacts with PRK2.

Its subcellular location is the cytoplasm. It is found in the cytoskeleton. The protein localises to the cilium basal body. The catalysed reaction is L-seryl-[protein] + ATP = O-phospho-L-seryl-[protein] + ADP + H(+). It catalyses the reaction L-threonyl-[protein] + ATP = O-phospho-L-threonyl-[protein] + ADP + H(+). In terms of biological role, cyclin-dependent kinase that phosphorylates the transcription factor ETS2 (in vitro) and positively controls its proteasomal degradation (in cells). Involved in the regulation of actin cytoskeleton organization through the phosphorylation of actin dynamics regulators such as PKN2. Is a negative regulator of ciliogenesis through phosphorylation of PKN2 and promotion of RhoA signaling. The protein is Cyclin-dependent kinase 10 (Cdk10) of Rattus norvegicus (Rat).